The following is a 966-amino-acid chain: DNA mismatch repair protein MutS (966 aa).

Position 709–716 (Gly709–Ser716) interacts with ATP. Residues Glu894–Val914 are disordered. The segment covering Pro899–Val912 has biased composition (pro residues).

The protein belongs to the DNA mismatch repair MutS family.

This protein is involved in the repair of mismatches in DNA. It is possible that it carries out the mismatch recognition step. This protein has a weak ATPase activity. The sequence is that of DNA mismatch repair protein MutS from Chloroflexus aurantiacus (strain ATCC 29366 / DSM 635 / J-10-fl).